A 90-amino-acid polypeptide reads, in one-letter code: MSRTVFCTRLKKDAEGLDFQLYPGDLGKRIFDNISKEAWAEWQSKQTMLINEKKLNMMNVDHRKLLETEMVNFLFEGQDVIIEGYTPPSK.

This sequence belongs to the Fe(2+)-trafficking protein family.

In terms of biological role, could be a mediator in iron transactions between iron acquisition and iron-requiring processes, such as synthesis and/or repair of Fe-S clusters in biosynthetic enzymes. In Photobacterium profundum (strain SS9), this protein is Probable Fe(2+)-trafficking protein.